The chain runs to 284 residues: Ribosomal RNA small subunit methyltransferase A (284 aa).

The S-adenosyl-L-methionine site is built by histidine 23, leucine 25, glycine 50, glutamate 71, aspartate 92, and asparagine 121.

It belongs to the class I-like SAM-binding methyltransferase superfamily. rRNA adenine N(6)-methyltransferase family. RsmA subfamily.

Its subcellular location is the cytoplasm. The enzyme catalyses adenosine(1518)/adenosine(1519) in 16S rRNA + 4 S-adenosyl-L-methionine = N(6)-dimethyladenosine(1518)/N(6)-dimethyladenosine(1519) in 16S rRNA + 4 S-adenosyl-L-homocysteine + 4 H(+). In terms of biological role, specifically dimethylates two adjacent adenosines (A1518 and A1519) in the loop of a conserved hairpin near the 3'-end of 16S rRNA in the 30S particle. May play a critical role in biogenesis of 30S subunits. In Verminephrobacter eiseniae (strain EF01-2), this protein is Ribosomal RNA small subunit methyltransferase A.